The primary structure comprises 2491 residues: Cation-independent mannose-6-phosphate receptor (2491 aa).

Residues 1 to 40 (MGAAAGRSPHLGPAPARRPQRSLLLLQLLLLVAAPGSTQA) form the signal peptide. The Lumenal portion of the chain corresponds to 41–2304 (QAAPFPELCS…MHKGLSERSQ (2264 aa)). 12 consecutive MRH domains span residues 47–163 (ELCS…ACKK), 172–320 (VPCY…ACHR), 326–468 (KTCS…ACVK), 473–619 (LLCG…ACVL), 625–762 (ENCT…ACPE), 765–924 (LECV…ACPI), 932–1079 (QACS…ACVP), 1082–1219 (VDCQ…ACPV), 1225–1363 (DNCE…ACPP), 1367–1508 (TECS…ACPM), 1514–1648 (DDCQ…ACEQ), and 1650–1797 (TECS…VCPD). 2 disulfide bridges follow: C49–C69 and C77–C84. An N-linked (GlcNAc...) asparagine glycan is attached at N112. Cystine bridges form between C117/C149, C134/C161, C174/C212, C228/C235, C275/C306, C288/C318, C328/C366, and C374/C382. Residues N400 and N435 are each glycosylated (N-linked (GlcNAc...) asparagine). 4 disulfides stabilise this stretch: C420–C454, C434–C466, C475–C519, and C531–C538. N-linked (GlcNAc...) asparagine glycans are attached at residues N543 and N581. 2 cysteine pairs are disulfide-bonded: C572/C605 and C586/C617. N626 carries N-linked (GlcNAc...) asparagine glycosylation. 5 disulfide bridges follow: C627-C664, C672-C679, C731-C760, C767-C814, and C823-C830. An N-linked (GlcNAc...) asparagine glycan is attached at N747. N871 is a glycosylation site (N-linked (GlcNAc...) asparagine). 7 cysteine pairs are disulfide-bonded: C875–C910, C893–C922, C934–C970, C976–C987, C1042–C1077, C1084–C1125, and C1134–C1142. Residues N951 and N957 are each glycosylated (N-linked (GlcNAc...) asparagine). N-linked (GlcNAc...) asparagine glycosylation occurs at N1164. Intrachain disulfides connect C1177–C1205, C1190–C1217, C1227–C1262, and C1270–C1282. A glycan (N-linked (GlcNAc...) asparagine) is linked at N1246. N1312 is a glycosylation site (N-linked (GlcNAc...) asparagine). Disulfide bonds link C1319/C1349, C1333/C1361, C1369/C1408, C1420/C1427, C1461/C1494, C1476/C1506, C1516/C1553, C1559/C1566, C1598/C1634, C1614/C1646, C1652/C1695, C1706/C1713, C1750/C1783, C1766/C1795, C1804/C1839, C1850/C1856, C1893/C1975, C1903/C1927, C1917/C1942, C1957/C1987, C1994/C2029, C2039/C2046, C2082/C2113, and C2096/C2125. A glycan (N-linked (GlcNAc...) asparagine) is linked at N1656. Residue N1757 is glycosylated (N-linked (GlcNAc...) asparagine). The 188-residue stretch at 1802-1989 (DGCTLTDEQL…EWKTKVVCPP (188 aa)) folds into the Fibronectin type-II domain. N1816 is a glycosylation site (N-linked (GlcNAc...) asparagine). 2 consecutive MRH domains span residues 1992 to 2127 (LECK…ACAV) and 2135 to 2280 (VNGT…VCPL). N-linked (GlcNAc...) asparagine glycosylation is present at N2085. A glycan (N-linked (GlcNAc...) asparagine) is linked at N2136. 3 disulfide bridges follow: C2188/C2194, C2232/C2266, and C2248/C2278. A helical transmembrane segment spans residues 2305-2327 (AVGAVLSLLLVALTCCLLALLLY). Over 2328–2491 (KKERRETVIS…DDSDEDLLHI (164 aa)) the chain is Cytoplasmic. An N6-acetyllysine modification is found at K2352. S2409 bears the Phosphoserine mark. The interval 2424-2491 (GRGAGAESSH…DDSDEDLLHI (68 aa)) is disordered. Position 2425 is an omega-N-methylarginine (R2425). The segment covering 2444-2459 (QEREDDRVGLVRGEKA) has biased composition (basic and acidic residues). Residues 2464 to 2477 (SSSAQQKTVSSTKL) show a composition bias toward polar residues. Phosphoserine occurs at positions 2479 and 2484. The segment covering 2479-2491 (SFHDDSDEDLLHI) has biased composition (basic and acidic residues).

Belongs to the MRL1/IGF2R family. Binds HA-I and HA-II plasma membrane adapters. Interacts with DPP4; the interaction is direct. Binds GGA1, GGA2 and GGA3. Interacts with the heterotrimeric retromer cargo-selective complex (CSC), formed by VPS26 (VPS26A or VPS26B), VPS29 and VPS35; which is involved in retrograde trafficking of the receptor from endosomes to the Golgi apparatus. Palmitoylated. Undergoes cysteine S-palmitoylation which promotes interaction with the retromer cargo-selective complex which mediates its retrograde trafficking to the Golgi apparatus.

The protein resides in the golgi apparatus membrane. It is found in the endosome membrane. Mediates the transport of phosphorylated lysosomal enzymes from the Golgi complex and the cell surface to lysosomes. Lysosomal enzymes bearing phosphomannosyl residues bind specifically to mannose-6-phosphate receptors in the Golgi apparatus and the resulting receptor-ligand complex is transported to an acidic prelysosomal compartment where the low pH mediates the dissociation of the complex. The receptor is then recycled back to the Golgi for another round of trafficking through its binding to the retromer. This receptor also binds IGF2. Acts as a positive regulator of T-cell coactivation by binding DPP4. In Homo sapiens (Human), this protein is Cation-independent mannose-6-phosphate receptor (IGF2R).